Consider the following 507-residue polypeptide: Nucleoporin p54 (507 aa).

9 repeat units span residues 5–6, 25–26, 28–29, 53–54, 61–62, 63–64, 67–68, 87–88, and 444–445. Residues 5–445 are 9 X 2 AA repeats of F-G; it reads FGAPSGTSGT…SQIRMQNHFG (441 aa).

It belongs to the NUP54 family. In terms of assembly, component of the p62 complex, a complex composed of NUP62, NUP54, and the isoform p58 and isoform p45 of NUP58. Interacts with NUTF2. Post-translationally, O-glycosylated.

The protein localises to the nucleus. The protein resides in the nuclear pore complex. It localises to the nucleus membrane. Its function is as follows. Component of the nuclear pore complex, a complex required for the trafficking across the nuclear membrane. This is Nucleoporin p54 (NUP54) from Homo sapiens (Human).